The following is a 687-amino-acid chain: Ribosomal RNA processing protein 1 homolog (687 aa).

The span at 288 to 298 (DEEDDEVNAEE) shows a compositional bias: acidic residues. Disordered regions lie at residues 288 to 312 (DEEDDEVNAEEEQPRATSLDPRAGN) and 463 to 624 (VKEA…GSGK). Composition is skewed to basic and acidic residues over residues 463–488 (VKEAEPKSKKAKKEEPPQQNKDDQTK), 497–520 (PKNDQSKPKIEDQPTLKAEKEEPA), and 527–543 (HSKTKEEQSKPKTDEQP). The segment covering 554 to 564 (KAKPTPKTKAA) has biased composition (low complexity). Positions 596–608 (KQANSKLPQSTPK) are enriched in polar residues. Phosphothreonine is present on residues Thr617 and Thr620. The residue at position 622 (Ser622) is a Phosphoserine.

Belongs to the RRP1 family.

Its subcellular location is the nucleus. May be involved in the generation of 28S rRNA. The sequence is that of Ribosomal RNA processing protein 1 homolog (Nnp-1) from Drosophila melanogaster (Fruit fly).